Reading from the N-terminus, the 310-residue chain is Fe-S cluster assembly protein dre2 (310 aa).

The interval 1 to 130 is N-terminal SAM-like domain; that stretch reads MSGRTLLLSP…KPDIEDMRAV (130 aa). The segment at 131-203 is linker; sequence PLRLGRKKHD…EDLLDGSELA (73 aa). [2Fe-2S] cluster contacts are provided by C212, C223, C226, and C228. Residues 212–228 are fe-S binding site A; that stretch reads CRPKAGRRRRACKDCTC. [4Fe-4S] cluster contacts are provided by C273, C276, C284, and C287. 2 consecutive short sequence motifs (cx2C motif) follow at residues 273–276 and 284–287; these read CGNC and CEGC. The segment at 273 to 287 is fe-S binding site B; that stretch reads CGNCSLGDAFRCEGC.

This sequence belongs to the anamorsin family. As to quaternary structure, monomer. Interacts with tah18. Interacts with mia40. The cofactor is [2Fe-2S] cluster. It depends on [4Fe-4S] cluster as a cofactor.

The protein localises to the cytoplasm. Its subcellular location is the mitochondrion intermembrane space. Its function is as follows. Component of the cytosolic iron-sulfur (Fe-S) protein assembly (CIA) machinery required for the maturation of extramitochondrial Fe-S proteins. Part of an electron transfer chain functioning in an early step of cytosolic Fe-S biogenesis, facilitating the de novo assembly of a [4Fe-4S] cluster on the scaffold complex cfd1-nbp35. Electrons are transferred to dre2 from NADPH via the FAD- and FMN-containing protein tah18. Tah18-dre2 are also required for the assembly of the diferric tyrosyl radical cofactor of ribonucleotide reductase (RNR), probably by providing electrons for reduction during radical cofactor maturation in the catalytic small subunit rnr2. This is Fe-S cluster assembly protein dre2 from Aspergillus clavatus (strain ATCC 1007 / CBS 513.65 / DSM 816 / NCTC 3887 / NRRL 1 / QM 1276 / 107).